The following is a 36-amino-acid chain: Pancreatic polypeptide (36 aa).

At Tyr36 the chain carries Tyrosine amide.

The protein belongs to the NPY family.

The protein resides in the secreted. Its function is as follows. Hormone secreted by pancreatic cells that acts as a regulator of pancreatic and gastrointestinal functions probably by signaling through the G protein-coupled receptor NPY4R2. The polypeptide is Pancreatic polypeptide (PPY) (Macaca mulatta (Rhesus macaque)).